The following is a 175-amino-acid chain: Bifunctional protein PyrR (175 aa).

Positions 98-110 (VIIIDDVLYTGRT) match the PRPP-binding motif.

The protein belongs to the purine/pyrimidine phosphoribosyltransferase family. PyrR subfamily. In terms of assembly, homodimer and homohexamer; in equilibrium.

The enzyme catalyses UMP + diphosphate = 5-phospho-alpha-D-ribose 1-diphosphate + uracil. Functionally, regulates transcriptional attenuation of the pyrimidine nucleotide (pyr) operon by binding in a uridine-dependent manner to specific sites on pyr mRNA. This disrupts an antiterminator hairpin in the RNA and favors formation of a downstream transcription terminator, leading to a reduced expression of downstream genes. Also displays a weak uracil phosphoribosyltransferase activity which is not physiologically significant. This chain is Bifunctional protein PyrR, found in Staphylococcus carnosus (strain TM300).